A 356-amino-acid polypeptide reads, in one-letter code: Tyrosine recombinase XerS (356 aa).

Positions isoleucine 16–threonine 121 constitute a Core-binding (CB) domain. The Tyr recombinase domain occupies alanine 169–aspartate 354. Catalysis depends on residues arginine 210, lysine 234, histidine 306, arginine 309, and histidine 332. Catalysis depends on tyrosine 341, which acts as the O-(3'-phospho-DNA)-tyrosine intermediate.

It belongs to the 'phage' integrase family. XerS subfamily.

The protein localises to the cytoplasm. With respect to regulation, ftsK is required for recombination. Site-specific tyrosine recombinase, which acts by catalyzing the cutting and rejoining of the recombining DNA molecules. Essential to convert dimers of the bacterial chromosome into monomers to permit their segregation at cell division. The polypeptide is Tyrosine recombinase XerS (Streptococcus equi subsp. zooepidemicus (strain MGCS10565)).